A 1020-amino-acid chain; its full sequence is Sodium/potassium-transporting ATPase subunit alpha-2 (1020 aa).

The propeptide occupies 1 to 5 (MGRGA). The interval 1–31 (MGRGAGREYSPAATTAENGGGKKKQKEKELD) is disordered. Residues 6 to 85 (GREYSPAATT…NALTPPPTTP (80 aa)) are Cytoplasmic-facing. Ser-10 bears the Phosphoserine mark. The segment at 80–82 (PPP) is interaction with phosphoinositide-3 kinase. Residues 86–106 (EWVKFCRQLFGGFSILLWIGA) form a helical membrane-spanning segment. Residues 107-129 (ILCFLAYGIQAAMEDEPSNDNLY) are Extracellular-facing. Residues 130–150 (LGVVLAAVVIVTGCFSYYQEA) traverse the membrane as a helical segment. The Cytoplasmic segment spans residues 151–286 (KSSKIMDSFK…VGRTPIAMEI (136 aa)). The span at 212 to 227 (DNSSLTGESEPQTRSP) shows a compositional bias: polar residues. Residues 212 to 231 (DNSSLTGESEPQTRSPEFTH) form a disordered region. Residues 287–306 (EHFIQLITGVAVFLGVSFFV) traverse the membrane as a helical segment. Residues 307-318 (LSLILGYSWLEA) are Extracellular-facing. The chain crosses the membrane as a helical span at residues 319–336 (VIFLIGIIVANVPEGLLA). At 337-769 (TVTVCLTLTA…EEGRLIFDNL (433 aa)) the chain is on the cytoplasmic side. Catalysis depends on Asp-374, which acts as the 4-aspartylphosphate intermediate. A phosphoserine mark is found at Ser-439, Ser-450, Ser-496, and Ser-559. Thr-570 is subject to Phosphothreonine. Phosphoserine is present on residues Ser-587 and Ser-672. The Mg(2+) site is built by Asp-714 and Asp-718. Residues 770 to 789 (KKSIAYTLTSNIPEITPFLL) traverse the membrane as a helical segment. At 790–799 (FIIANIPLPL) the chain is on the extracellular side. A helical transmembrane segment spans residues 800–820 (GTVTILCIDLGTDMVPAISLA). Over 821 to 840 (YEAAESDIMKRQPRNSQTDK) the chain is Cytoplasmic. Ser-826 is modified (phosphoserine). A helical transmembrane segment spans residues 841-863 (LVNERLISMAYGQIGMIQALGGF). The Extracellular segment spans residues 864-915 (FTYFVILAENGFLPSRLLGIRLDWDDRTMNDLEDSYGQEWTYEQRKVVEFTC). Residues 916–935 (HTAFFASIVVVQWADLIICK) traverse the membrane as a helical segment. At 936–948 (TRRNSVFQQGMKN) the chain is on the cytoplasmic side. A Phosphoserine; by PKA modification is found at Ser-940. A helical transmembrane segment spans residues 949–967 (KILIFGLLEETALAAFLSY). At 968-982 (CPGMGVALRMYPLKV) the chain is on the extracellular side. Residues 983 to 1003 (TWWFCAFPYSLLIFIYDEVRK) form a helical membrane-spanning segment. The Cytoplasmic segment spans residues 1004–1020 (LILRRYPGGWVEKETYY).

It belongs to the cation transport ATPase (P-type) (TC 3.A.3) family. Type IIC subfamily. In terms of assembly, the sodium/potassium-transporting ATPase is composed of a catalytic alpha subunit, an auxiliary non-catalytic beta subunit and an additional regulatory subunit. Interacts with regulatory subunit FXYD1.

Its subcellular location is the membrane. The protein localises to the cell membrane. It carries out the reaction K(+)(out) + Na(+)(in) + ATP + H2O = K(+)(in) + Na(+)(out) + ADP + phosphate + H(+). In terms of biological role, this is the catalytic component of the active enzyme, which catalyzes the hydrolysis of ATP coupled with the exchange of sodium and potassium ions across the plasma membrane. This action creates the electrochemical gradient of sodium and potassium, providing the energy for active transport of various nutrients. This chain is Sodium/potassium-transporting ATPase subunit alpha-2 (ATP1A2), found in Homo sapiens (Human).